The primary structure comprises 215 residues: Glutathione S-transferase D2 (215 aa).

Positions M1–D80 constitute a GST N-terminal domain. Residues H50 to I52 and E64 to R66 each bind glutathione. The 127-residue stretch at D86 to L212 folds into the GST C-terminal domain.

It belongs to the GST superfamily. Delta family. Homodimer.

It catalyses the reaction RX + glutathione = an S-substituted glutathione + a halide anion + H(+). Functionally, conjugation of reduced glutathione to a wide number of exogenous and endogenous hydrophobic electrophiles. May be involved in detoxification. The sequence is that of Glutathione S-transferase D2 from Drosophila melanogaster (Fruit fly).